The following is a 764-amino-acid chain: Thyrotropin receptor (764 aa).

The first 20 residues, 1 to 20 (MRPADLLQLVLLLDLPRDLG), serve as a signal peptide directing secretion. Topologically, residues 21-413 (GMGCSSPPCE…EFNPCEDIMG (393 aa)) are extracellular. A disulfide bond links Cys-31 and Cys-41. Asn-77, Asn-99, and Asn-113 each carry an N-linked (GlcNAc...) asparagine glycan. LRR repeat units lie at residues 100–124 (LSKV…ALKE), 125–150 (LPLL…VYST), 152–174 (IFFI…AFQG), 176–199 (CNET…AFNG), 200–223 (TKLD…AFGG), 227–248 (GPSL…GLEH), and 250–271 (KELI…SFLH). Asn-177 and Asn-198 each carry an N-linked (GlcNAc...) asparagine glycan. Residue Asn-302 is glycosylated (N-linked (GlcNAc...) asparagine). Sulfotyrosine is present on Tyr-385. The helical transmembrane segment at 414-441 (YKFLRIVVWFVSLLALLGNVFVLLILLT) threads the bilayer. Residues 442–450 (SHYKLNVPR) are Cytoplasmic-facing. The chain crosses the membrane as a helical span at residues 451–473 (FLMCNLAFADFCMGMYLLLIASV). The Extracellular segment spans residues 474 to 494 (DLYTHSEYYNHAIDWQTGPGC). A disulfide bond links Cys-494 and Cys-569. Residues 495-517 (NTAGFFTVFASELSVYTLTVITL) form a helical membrane-spanning segment. The Cytoplasmic segment spans residues 518–537 (ERWYAITFAMRLDRKIRLRH). Residues 538–560 (ACAIMVGGWVCCFLLALLPLVGI) traverse the membrane as a helical segment. Topologically, residues 561-580 (SSYAKVSICLPMDTETPLAL) are extracellular. Residues 581-602 (AYIVFVLTLNIVAFVIVCCCYV) traverse the membrane as a helical segment. At 603-625 (KIYITVRNPQYNPGDKDTKIAKR) the chain is on the cytoplasmic side. Residues 626–649 (MAVLIFTDFICMAPISFYALSAIL) traverse the membrane as a helical segment. Over 650-660 (NKPLITVSNSK) the chain is Extracellular. The chain crosses the membrane as a helical span at residues 661 to 682 (ILLVLFYPLNSCANPFLYAIFT). Residues 683–764 (KAFQRDVFIL…ISEEYMQTVL (82 aa)) are Cytoplasmic-facing. Residues 762 to 764 (TVL) carry the PDZ-binding motif.

This sequence belongs to the G-protein coupled receptor 1 family. FSH/LSH/TSH subfamily. Interacts with heterodimer GPHA2:GPHB5; this interaction stimulates cAMP production. Interacts (via the PDZ-binding motif) with SCRIB; regulates TSHR trafficking and function. In terms of processing, glycosylated. Sulfated. Sulfation on Tyr-385 plays a role in thyrotropin receptor binding and activation. Expressed in thyroide cells (at protein level). Expressed in the thyroid.

It is found in the cell membrane. The protein resides in the basolateral cell membrane. Receptor for the thyroid-stimulating hormone (TSH) or thyrotropin. Also acts as a receptor for the heterodimeric glycoprotein hormone (GPHA2:GPHB5) or thyrostimulin. The activity of this receptor is mediated by G proteins which activate adenylate cyclase. Plays a central role in controlling thyroid cell metabolism. The sequence is that of Thyrotropin receptor (TSHR) from Homo sapiens (Human).